The chain runs to 141 residues: Anthrone oxygenase ptaC (141 aa).

The signal sequence occupies residues 1–19; that stretch reads MMGLPLMAVPMLLDTGADP. The next 2 membrane-spanning stretches (helical) occupy residues 33 to 53 and 64 to 84; these read GVRTMPPLAITTFILYVWTII and ILAVAAVVTMGMIPFTWYVLA.

It belongs to the anthrone oxygenase family.

It localises to the membrane. The protein operates within secondary metabolite biosynthesis. Its function is as follows. Anthrone oxygenase; part of the gene cluster that mediates the biosynthesis of pestheic acid, a diphenyl ether which is a biosynthetic precursor of the unique chloropupukeananes. The biosynthesis initiates from condensation of acetate and malonate units catalyzed by the non-reducing PKS ptaA. As the ptaA protein is TE/CLC domain-deficient, hydrolysis and Claisen cyclization of the polyketide could be catalyzed by ptaB containing a beta-lactamase domain. The ptaB protein might hydrolyze the thioester bond between the ACP of ptaA and the intermediate to release atrochrysone carboxylic acid, which is spontaneously dehydrated to form endocrocin anthrone. Endocrocin anthrone is then converted to endocrocin, catalyzed by the anthrone oxygenase ptaC. Spontaneous decarboxylation of endocrocin occurs to generate emodin. An O-methyltransferase (ptaH or ptaI) could methylate emodin to form physcion. PtaJ could then catalyze the oxidative cleavage of physcion, and rotation of the intermediate could then afford desmethylisosulochrin. PtaF, a putative NADH-dependent oxidoreductase, might also participate in the oxidative cleavage step. Desmethylisosulochrin is then transformed by another O-methyltransferase (ptaH or ptaI) to form isosulochrin. Chlorination of isosulochrin by ptaM in the cyclohexadienone B ring then produces chloroisosulochrin. PtaE is responsible for the oxidative coupling reactions of both benzophenones isosulochrin and chloroisosulochrin to RES-1214-1 and pestheic acid respectively, regardless of chlorination. This is Anthrone oxygenase ptaC from Pestalotiopsis fici (strain W106-1 / CGMCC3.15140).